The primary structure comprises 193 residues: NADH-quinone oxidoreductase subunit B (193 aa).

Residues 1–11 (MGLTGTNTTLV) are compositionally biased toward polar residues. The tract at residues 1–23 (MGLTGTNTTLVAPQPKGILDPRT) is disordered. Residues cysteine 72, cysteine 73, cysteine 137, and cysteine 167 each contribute to the [4Fe-4S] cluster site.

The protein belongs to the complex I 20 kDa subunit family. NDH-1 is composed of 14 different subunits. Subunits NuoB, C, D, E, F, and G constitute the peripheral sector of the complex. [4Fe-4S] cluster serves as cofactor.

The protein localises to the cell inner membrane. The catalysed reaction is a quinone + NADH + 5 H(+)(in) = a quinol + NAD(+) + 4 H(+)(out). Its function is as follows. NDH-1 shuttles electrons from NADH, via FMN and iron-sulfur (Fe-S) centers, to quinones in the respiratory chain. Couples the redox reaction to proton translocation (for every two electrons transferred, four hydrogen ions are translocated across the cytoplasmic membrane), and thus conserves the redox energy in a proton gradient. This chain is NADH-quinone oxidoreductase subunit B, found in Brucella canis (strain ATCC 23365 / NCTC 10854 / RM-666).